A 240-amino-acid chain; its full sequence is UDP-2,3-diacylglucosamine hydrolase (240 aa).

Mn(2+)-binding residues include Asp-8, His-10, Asp-41, Asn-79, and His-114. 79 to 80 (NR) is a binding site for substrate. Substrate is bound by residues Asp-122, Ser-160, Asn-164, Lys-167, and His-195. Mn(2+)-binding residues include His-195 and His-197.

This sequence belongs to the LpxH family. Mn(2+) is required as a cofactor.

The protein resides in the cell inner membrane. It carries out the reaction UDP-2-N,3-O-bis[(3R)-3-hydroxytetradecanoyl]-alpha-D-glucosamine + H2O = 2-N,3-O-bis[(3R)-3-hydroxytetradecanoyl]-alpha-D-glucosaminyl 1-phosphate + UMP + 2 H(+). Its pathway is glycolipid biosynthesis; lipid IV(A) biosynthesis; lipid IV(A) from (3R)-3-hydroxytetradecanoyl-[acyl-carrier-protein] and UDP-N-acetyl-alpha-D-glucosamine: step 4/6. Functionally, hydrolyzes the pyrophosphate bond of UDP-2,3-diacylglucosamine to yield 2,3-diacylglucosamine 1-phosphate (lipid X) and UMP by catalyzing the attack of water at the alpha-P atom. Involved in the biosynthesis of lipid A, a phosphorylated glycolipid that anchors the lipopolysaccharide to the outer membrane of the cell. In Escherichia coli O81 (strain ED1a), this protein is UDP-2,3-diacylglucosamine hydrolase.